Here is a 64-residue protein sequence, read N- to C-terminus: Prokaryotic ubiquitin-like protein Pup (64 aa).

Residues 1–38 (MAQEQTKRGGGGGEDDDPTGSTAAGQERREKLTEETDD) are disordered. The interval 21–58 (STAAGQERREKLTEETDDLLDEIDDVLEENAEDFVRAY) is ARC ATPase binding. Residues 23 to 52 (AAGQERREKLTEETDDLLDEIDDVLEENAE) are a coiled coil. Glutamine 64 bears the Deamidated glutamine mark. An Isoglutamyl lysine isopeptide (Gln-Lys) (interchain with K-? in acceptor proteins) cross-link involves residue glutamine 64.

It belongs to the prokaryotic ubiquitin-like protein family. As to quaternary structure, strongly interacts with the proteasome-associated ATPase ARC through a hydrophobic interface; the interacting region of Pup lies in its C-terminal half. There is one Pup binding site per ARC hexamer ring. Is modified by deamidation of its C-terminal glutamine to glutamate by the deamidase Dop, a prerequisite to the subsequent pupylation process.

Its pathway is protein degradation; proteasomal Pup-dependent pathway. Functionally, protein modifier that is covalently attached to lysine residues of substrate proteins, thereby targeting them for proteasomal degradation. The tagging system is termed pupylation. The protein is Prokaryotic ubiquitin-like protein Pup of Mycolicibacterium gilvum (strain PYR-GCK) (Mycobacterium gilvum (strain PYR-GCK)).